The sequence spans 78 residues: Large ribosomal subunit protein bL28 (78 aa).

Belongs to the bacterial ribosomal protein bL28 family.

This Prochlorococcus marinus (strain MIT 9515) protein is Large ribosomal subunit protein bL28.